A 678-amino-acid chain; its full sequence is Probable antibacterial peptide polyprotein (678 aa).

A run of 14 repeats spans residues 1-67 (MRSP…PEVR), 68-114 (ERRS…PEVR), 115-161 (ERRS…PEVR), 162-208 (ERRS…PEVR), 209-255 (ERRS…PEVR), 256-302 (ERGS…PEVR), 303-349 (ERRS…PEVR), 350-396 (ERRS…PEVR), 397-443 (ERRS…PEVR), 444-490 (ERRS…PEVR), 491-537 (ERRS…PEVR), 538-584 (ERRS…PEVR), 585-631 (ERRS…PEVR), and 632-678 (ERRS…PEVR). The interval 1-678 (MRSPRVIHLA…SEGVVLPEVR (678 aa)) is 14 X approximate tandem repeats. A glycan (O-linked (GalNAc...) threonine) is linked at Thr-32. Disordered stretches follow at residues 58-97 (SEAE…DASL) and 113-678 (VRER…PEVR). The span at 64-73 (PEVRERRSPV) shows a compositional bias: basic and acidic residues. 2 O-linked (GalNAc...) threonine glycosylation sites follow: Thr-83 and Thr-130. A compositionally biased stretch (low complexity) spans 145 to 157 (ESELSPLSEAEVL). The span at 158 to 167 (PEVRERRSPV) shows a compositional bias: basic and acidic residues. Residue Thr-177 is glycosylated (O-linked (GalNAc...) threonine). Positions 188–204 (VASLESELSPLSEAEVL) are enriched in low complexity. Over residues 205 to 214 (PEVRERRSPV) the composition is skewed to basic and acidic residues. O-linked (GalNAc...) threonine glycans are attached at residues Thr-224 and Thr-271. Residues 299-308 (PEVRERRSPV) are compositionally biased toward basic and acidic residues. Thr-318 is a glycosylation site (O-linked (GalNAc...) threonine). A compositionally biased stretch (low complexity) spans 333–345 (ESELSPLSEAEVL). Positions 346–355 (PEVRERRSPV) are enriched in basic and acidic residues. An O-linked (GalNAc...) threonine glycan is attached at Thr-365. Residues 380 to 392 (ESELSPLSEAEVL) show a composition bias toward low complexity. Over residues 393 to 402 (PEVRERRSPV) the composition is skewed to basic and acidic residues. Thr-412 is a glycosylation site (O-linked (GalNAc...) threonine). Residues 427 to 439 (ESELSPLSEAEVL) are compositionally biased toward low complexity. A compositionally biased stretch (basic and acidic residues) spans 440-449 (PEVRERRSPV). A glycan (O-linked (GalNAc...) threonine) is linked at Thr-459. The span at 474–486 (ESELSPLSEAEVL) shows a compositional bias: low complexity. Residues 487–496 (PEVRERRSPV) are compositionally biased toward basic and acidic residues. O-linked (GalNAc...) threonine glycosylation is present at Thr-506. Residues 521-533 (ESELSPSSEAEVL) show a composition bias toward low complexity. Residues 534-543 (PEVRERRSPV) are compositionally biased toward basic and acidic residues. A glycan (O-linked (GalNAc...) threonine) is linked at Thr-553. A compositionally biased stretch (low complexity) spans 568-580 (ESELSPLSEAEVL). Basic and acidic residues predominate over residues 581 to 590 (PEVRERRSPV). O-linked (GalNAc...) threonine glycosylation is present at Thr-600. The segment covering 615 to 627 (ESELSPLSEAEGL) has biased composition (low complexity). Thr-647 carries an O-linked (GalNAc...) threonine glycan.

The protein localises to the secreted. Its function is as follows. Has antibacterial activity in vitro. In Riptortus clavatus (Bean bug), this protein is Probable antibacterial peptide polyprotein.